The chain runs to 177 residues: Alkyl hydroperoxide reductase AhpD (177 aa).

Catalysis depends on C131, which acts as the Proton donor. C131 and C134 are oxidised to a cystine. C134 (cysteine sulfenic acid (-SOH) intermediate) is an active-site residue.

It belongs to the AhpD family. As to quaternary structure, homotrimer.

The catalysed reaction is N(6)-[(R)-dihydrolipoyl]-L-lysyl-[lipoyl-carrier protein] + a hydroperoxide = N(6)-[(R)-lipoyl]-L-lysyl-[lipoyl-carrier protein] + an alcohol + H2O. Functionally, antioxidant protein with alkyl hydroperoxidase activity. Required for the reduction of the AhpC active site cysteine residues and for the regeneration of the AhpC enzyme activity. In Streptomyces griseus subsp. griseus (strain JCM 4626 / CBS 651.72 / NBRC 13350 / KCC S-0626 / ISP 5235), this protein is Alkyl hydroperoxide reductase AhpD.